Reading from the N-terminus, the 134-residue chain is ATP synthase epsilon chain (134 aa).

This sequence belongs to the ATPase epsilon chain family. As to quaternary structure, F-type ATPases have 2 components, CF(1) - the catalytic core - and CF(0) - the membrane proton channel. CF(1) has five subunits: alpha(3), beta(3), gamma(1), delta(1), epsilon(1). CF(0) has three main subunits: a, b and c.

It localises to the cell inner membrane. In terms of biological role, produces ATP from ADP in the presence of a proton gradient across the membrane. The chain is ATP synthase epsilon chain from Syntrophobacter fumaroxidans (strain DSM 10017 / MPOB).